The chain runs to 162 residues: Shikimate kinase (162 aa).

11–16 is a binding site for ATP; sequence GSGKSS. Serine 15 contacts Mg(2+). The substrate site is built by aspartate 33, arginine 57, and glycine 80. An LID domain region spans residues 109–123; it reads NQKEREKRPLLNNLT. Residue arginine 116 coordinates ATP. Arginine 132 lines the substrate pocket.

Belongs to the shikimate kinase family. As to quaternary structure, monomer. Mg(2+) is required as a cofactor.

Its subcellular location is the cytoplasm. It carries out the reaction shikimate + ATP = 3-phosphoshikimate + ADP + H(+). It participates in metabolic intermediate biosynthesis; chorismate biosynthesis; chorismate from D-erythrose 4-phosphate and phosphoenolpyruvate: step 5/7. Functionally, catalyzes the specific phosphorylation of the 3-hydroxyl group of shikimic acid using ATP as a cosubstrate. The chain is Shikimate kinase (aroK) from Helicobacter pylori (strain ATCC 700392 / 26695) (Campylobacter pylori).